The sequence spans 625 residues: PTS system beta-glucoside-specific EIIBCA component (625 aa).

In terms of domain architecture, PTS EIIB type-1 spans 1-84 (MTELARKIVA…NSVAGLDEKA (84 aa)). The Periplasmic portion of the chain corresponds to 1–99 (MTELARKIVA…NDDKGNLLNR (99 aa)). The Phosphocysteine intermediate; for EIIB activity role is filled by Cys-24. The helical transmembrane segment at 100–120 (FVYVISGIFTPLIGLMAATGI) threads the bilayer. Residues 102 to 465 (YVISGIFTPL…RQPAQGAPQE (364 aa)) enclose the PTS EIIC type-1 domain. Over 121 to 140 (LKGMLALALTFQWTTEQSGT) the chain is Cytoplasmic. A helical transmembrane segment spans residues 141-161 (YLILFSASDALFWFFPIILGY). Over 162–166 (TAGKR) the chain is Periplasmic. The chain crosses the membrane as a helical span at residues 167–187 (FGGNPFTAMVIGGALVHPLIL). The Cytoplasmic segment spans residues 188–202 (TAFENGQKADALGLD). Residues 203–223 (FLGIPVTLLNYSSSVIPIIFS) traverse the membrane as a helical segment. Residues 224-244 (AWLCSILERRLNAWLPSAIKN) are Periplasmic-facing. Residues 245–265 (FFTPLLCLMVITPVTFLLVGP) form a helical membrane-spanning segment. At 266–284 (LSTWISELIAAGYLWLYQA) the chain is on the cytoplasmic side. The chain crosses the membrane as a helical span at residues 285-305 (VPAFAGAVMGGFWQIFVMFGL). Over 306–324 (HWGLVPLCINNFTVLGYDT) the chain is Periplasmic. A helical transmembrane segment spans residues 325–345 (MIPLLMPAIMAQVGAALGVFL). Topologically, residues 346 to 353 (CERDAQKK) are cytoplasmic. Residues 354–374 (VVAGSAALTSLFGITEPAVYG) form a helical membrane-spanning segment. The Periplasmic segment spans residues 375–380 (VNLPRK). A helical membrane pass occupies residues 381 to 401 (YPFVIACISGALGATIIGYAQ). Residues 402 to 403 (TK) lie on the Cytoplasmic side of the membrane. Residues 404-424 (VYSFGLPSIFTFMQTIPSTGI) traverse the membrane as a helical segment. Topologically, residues 425-431 (DFTVWAS) are periplasmic. The helical transmembrane segment at 432–452 (VIGGVIAIGCAFVGTVMLHFI) threads the bilayer. Residues 453-625 (TAKRQPAQGA…AGEPLLSIIR (173 aa)) lie on the Cytoplasmic side of the membrane. The PTS EIIA type-1 domain occupies 495 to 599 (DTTFASGLLG…DLTTPVLISN (105 aa)). His-547 acts as the Tele-phosphohistidine intermediate; for EIIA activity in catalysis.

It localises to the cell inner membrane. Functionally, the phosphoenolpyruvate-dependent sugar phosphotransferase system (sugar PTS), a major carbohydrate active -transport system, catalyzes the phosphorylation of incoming sugar substrates concomitantly with their translocation across the cell membrane. This system is involved in beta-glucoside transport. In terms of biological role, acts both as a kinase and as a phosphatase on BglG. The sequence is that of PTS system beta-glucoside-specific EIIBCA component (bglF) from Escherichia coli (strain K12).